A 513-amino-acid polypeptide reads, in one-letter code: Mannan endo-1,4-beta-mannosidase A and B (513 aa).

A signal peptide spans 1–26; it reads MKVYKKVAFVMAFIMFFSVLPTISMS. The region spanning 41–353 is the GH26 domain; that stretch reads QTTKNVYSWL…FNDSWVVNRG (313 aa). Residue His-132 participates in substrate binding. Glu-195 (proton donor) is an active-site residue. Trp-200 and Tyr-270 together coordinate substrate. The active-site Nucleophile is Glu-295. 429–430 serves as a coordination point for substrate; the sequence is IK.

It belongs to the glycosyl hydrolase 26 family.

It localises to the secreted. It carries out the reaction Random hydrolysis of (1-&gt;4)-beta-D-mannosidic linkages in mannans, galactomannans and glucomannans.. Functionally, could be involved in the degradation of glucomannan and catalyzes the endo hydrolysis of beta-1,4-linked mannan, galactomannan and glucomannan. This is Mannan endo-1,4-beta-mannosidase A and B from Caldalkalibacillus mannanilyticus (strain DSM 16130 / CIP 109019 / JCM 10596 / AM-001) (Bacillus mannanilyticus).